The chain runs to 249 residues: Gamma-glutamyl peptidase 3 (249 aa).

Residues 19–217 form the Glutamine amidotransferase type-1 domain; it reads SEFVKKTYGG…VDRVLNMKLM (199 aa). C103 acts as the Nucleophile in catalysis. Catalysis depends on residues H196 and E198.

This sequence belongs to the peptidase C26 family.

Its subcellular location is the cytoplasm. It localises to the cytosol. It carries out the reaction an S-[(1E)-1-(hydroxyimino)-omega-(methylsulfanyl)alkyl]-L-glutathione + H2O = an S-[(1E)-1-(hydroxyimino)-omega-(methylsulfanyl)alkyl]-L-cysteinylglycine + L-glutamate. The enzyme catalyses (E)-1-(glutathione-S-yl)-2-(1H-indol-3-yl)acetohydroximate + H2O = (E)-1-(glycyl-L-cystein-S-yl)-2-(1H-indol-3-yl)acetohydroximate + L-glutamate. The catalysed reaction is 2-(glutathion-S-yl)-2-(1H-indol-3-yl)acetonitrile + H2O = 2-(glycyl-L-cystein-S-yl)-2-(1H-indol-3-yl)acetonitrile + L-glutamate. It catalyses the reaction (Z)-1-(glutathione-S-yl)-2-phenylacetohydroximate + H2O = (Z)-1-(glycyl-L-cystein-S-yl)-2-phenylacetohydroximate + L-glutamate. It participates in secondary metabolite biosynthesis. Involved in glucosinolate biosynthesis. Hydrolyzes the gamma-glutamyl peptide bond of several glutathione (GSH) conjugates to produce Cys-Gly conjugates related to glucosinolates. The gamma-Glu-Cys-Gly-GSH conjugates are the sulfur-donating molecule in glucosinolate biosynthesis. Can use the GSH conjugate of the camalexin intermediate IAN (GS-IAN) as substrate. Required for the biosynthesis of camalexin, a pathogen-inducible phytoalexin with antibacterial and antifungal properties. This chain is Gamma-glutamyl peptidase 3, found in Arabidopsis thaliana (Mouse-ear cress).